Reading from the N-terminus, the 153-residue chain is ORM1-like protein 3 (153 aa).

The important for ceramide level-sensing stretch occupies residues 1–17 (MNVGTAHSEVNPNTRVM). Over 1–21 (MNVGTAHSEVNPNTRVMNSRG) the chain is Cytoplasmic. 2 helical membrane-spanning segments follow: residues 22–42 (IWLS…SIPF) and 43–63 (VSVP…MYIF). At 64–94 (LHTVKGTPFETPDQGKARLLTHWEQMDYGVQ) the chain is on the cytoplasmic side. A helical membrane pass occupies residues 95-117 (FTASRKFLTITPIVLYFLTSFYT). At 118–121 (KYDQ) the chain is on the extracellular side. Residues 122–142 (IHFILNTVSLMSVLIPKLPQL) form a helical membrane-spanning segment. Residue Pro137 is modified to Hydroxyproline. Residues 143–153 (HGVRIFGINKY) lie on the Cytoplasmic side of the membrane.

It belongs to the ORM family. Ceramide-sensitive subunit of the serine palmitoyltransferase (SPT) complex, which is also composed of SPTLC1, SPTLC2/3 and SPTSSA/B. When hydroxylated at Pro-137, ubiquitinated via 'Lys-48'-linkage, leading to proteasomal degradation. In endothelial cells, ORMDL3 proteasomal degradation is controlled by the sphingosine 1-phosphate receptor signaling pathway.

It localises to the endoplasmic reticulum membrane. In terms of biological role, plays an essential role in the homeostatic regulation of sphingolipid de novo biosynthesis by modulating the activity of the serine palmitoyltransferase (SPT) in response to ceramide levels. When complexed to SPT, the binding of ceramides to its N-terminus stabilizes a conformation that block SPT substrate entry, hence preventing SPT catalytic activity. Through this mechanism, maintains ceramide levels at sufficient concentrations for the production of complex sphingolipids, but which prevents the accumulation of ceramides to levels that trigger apoptosis. This Bos taurus (Bovine) protein is ORM1-like protein 3 (ORMDL3).